The following is a 1441-amino-acid chain: ABC transporter G family member 51 (1441 aa).

The segment at 52-71 (VLPDPDGLGGGDGGGRGEGQ) is disordered. Positions 58 to 69 (GLGGGDGGGRGE) are enriched in gly residues. The region spanning 154-428 (LISSHLLRPD…FKSLGFSLPP (275 aa)) is the ABC transporter 1 domain. 187 to 194 (GPPASGKS) serves as a coordination point for ATP. The region spanning 505-718 (SLVRACFARE…AQRAVSVNEF (214 aa)) is the ABC transmembrane type-2 1 domain. 6 helical membrane passes run 523–543 (FLYT…STLF), 558–578 (LYLA…FTEM), 615–635 (FIEA…APTV), 642–662 (MLLL…MGAI), 668–688 (IAST…GFVV), and 751–771 (FWIG…MFTL). The ABC transporter 2 domain occupies 838-1090 (MTFHNVNYYV…DMINYFQGIP (253 aa)). 883-890 (GASGSGKT) contacts ATP. Residues 1163 to 1380 (TQFMVCLRKQ…TLRGVITSQL (218 aa)) form the ABC transmembrane type-2 2 domain. The next 7 helical transmembrane spans lie at 1184 to 1204 (VVRL…FWNV), 1214 to 1234 (ILLL…NNAS), 1271 to 1291 (VEIP…YFMV), 1300 to 1320 (LVLY…YGMV), 1330 to 1350 (MASV…GFLI), 1355 to 1375 (IPGW…LRGV), and 1413 to 1433 (ATVA…AISI).

It belongs to the ABC transporter superfamily. ABCG family. PDR (TC 3.A.1.205) subfamily.

It localises to the membrane. In terms of biological role, may be a general defense protein. This Oryza sativa subsp. japonica (Rice) protein is ABC transporter G family member 51.